We begin with the raw amino-acid sequence, 47 residues long: Defensin-like protein 1 (47 aa).

4 disulfides stabilise this stretch: C3–C47, C14–C36, C20–C41, and C24–C43.

This sequence belongs to the DEFL family. Protease inhibitor I18 (RTI/MTI-2) subfamily.

This Sorghum bicolor (Sorghum) protein is Defensin-like protein 1.